The following is a 339-amino-acid chain: Dihydroorotate dehydrogenase (quinone) (339 aa).

FMN contacts are provided by residues 64–68 (AGADK) and T88. Position 68 (K68) interacts with substrate. Position 113 to 117 (113 to 117 (NRNGF)) interacts with substrate. Residues N141 and N174 each coordinate FMN. Position 174 (N174) interacts with substrate. S177 functions as the Nucleophile in the catalytic mechanism. N179 is a binding site for substrate. FMN-binding residues include K219 and T247. 248-249 (NT) provides a ligand contact to substrate. Residues G270, G299, and 320–321 (YS) each bind FMN.

The protein belongs to the dihydroorotate dehydrogenase family. Type 2 subfamily. In terms of assembly, monomer. It depends on FMN as a cofactor.

It localises to the cell membrane. It catalyses the reaction (S)-dihydroorotate + a quinone = orotate + a quinol. The protein operates within pyrimidine metabolism; UMP biosynthesis via de novo pathway; orotate from (S)-dihydroorotate (quinone route): step 1/1. Functionally, catalyzes the conversion of dihydroorotate to orotate with quinone as electron acceptor. This chain is Dihydroorotate dehydrogenase (quinone) (pyrD), found in Pasteurella multocida (strain Pm70).